Reading from the N-terminus, the 1868-residue chain is Inactive histone-lysine N-methyltransferase 2E (1868 aa).

Positions 63–66 (DHNY) match the HCFC1-binding motif (HBM) motif. A PHD-type zinc finger spans residues 118 to 166 (VTRCICGFTHDDGYMICCDKCSVWQHIDCMGIDRQHIPDTYLCERCQPR). Residues cysteine 121, cysteine 123, cysteine 135, cysteine 138, histidine 143, cysteine 146, cysteine 160, and cysteine 163 each contribute to the Zn(2+) site. 3 disordered regions span residues 178–197 (RRKR…SGDE), 217–268 (ASRV…SSDS), and 308–329 (GSGN…SLFR). One can recognise an SET domain in the interval 330–447 (PPVESHIQKN…KGTEITIAFD (118 aa)). O-linked (GlcNAc) serine glycosylation is present at serine 435. Threonine 440 carries O-linked (GlcNAc) threonine glycosylation. The disordered stretch occupies residues 472 to 504 (KRSSESTENINSGYETRRKKGKKEKDTSKEKDI). Positions 494-504 (KEKDTSKEKDI) are enriched in basic and acidic residues. Residues 559-613 (VEMESEEQIAERKRKMTREERKMEAILQAFARLEKREKRREQALERISTAKTEVK) are a coiled coil. A compositionally biased stretch (basic residues) spans 646-670 (NRTKQRKSFSRSRTHIGQQRRRHRT). Residues 646–682 (NRTKQRKSFSRSRTHIGQQRRRHRTVSMCSDIPPSSP) are disordered. Residues serine 837 and serine 845 each carry the phosphoserine modification. Over residues 884-908 (YSESSTPTPSPYATPTHTDITPTDP) the composition is skewed to low complexity. Disordered regions lie at residues 884 to 924 (YSES…ETYR) and 1038 to 1068 (SMET…SSWV). Residues 1049 to 1068 (PSNQLDSTHSGRGTMYSSWV) show a composition bias toward polar residues. Serine 1070 is subject to Phosphoserine. Disordered stretches follow at residues 1165–1222 (KRQR…PPPA), 1236–1315 (SSEE…SNHI), 1334–1565 (PDAE…QNQQ), and 1585–1842 (VFTS…QASP). Over residues 1184 to 1197 (SVSPHPSGSLSSSG) the composition is skewed to low complexity. The span at 1203–1213 (SSENGEQAENQ) shows a compositional bias: polar residues. Serine 1282 is modified (phosphoserine). A compositionally biased stretch (basic and acidic residues) spans 1282–1291 (SDHRKDKDSG). Low complexity-rich tracts occupy residues 1294–1312 (SPCV…SSHS) and 1348–1363 (PSPD…SKPG). Serine 1364 carries the post-translational modification Phosphoserine. 3 stretches are compositionally biased toward polar residues: residues 1389 to 1421 (ATVS…QNHA), 1451 to 1463 (HTEN…TPHT), and 1488 to 1498 (SQSPQVGTPQR). The span at 1506–1518 (AAAQNLQANPQQA) shows a compositional bias: low complexity. Polar residues predominate over residues 1519–1547 (TSGALFTQTPSGQSSATYSQFNQQSLNST). Residues 1548–1558 (APPPPPPPPPS) show a composition bias toward pro residues. The segment covering 1585–1603 (VFTSGPNQALPGSTSQQSV) has biased composition (polar residues). A compositionally biased stretch (pro residues) spans 1631–1642 (VPPPPPPPPAPG). The span at 1647-1656 (QQPSSHQQHS) shows a compositional bias: polar residues. A compositionally biased stretch (pro residues) spans 1682-1692 (LPPPPPPPGPA). Polar residues predominate over residues 1706–1716 (QSLQAQHQHVV). A compositionally biased stretch (pro residues) spans 1719–1732 (APPPPPPPPPPPPA). The span at 1806–1816 (QGPNSIPTPTA) shows a compositional bias: polar residues.

The protein belongs to the class V-like SAM-binding methyltransferase superfamily. Histone-lysine methyltransferase family. TRX/MLL subfamily. As to quaternary structure, component of a complex composed of KMT2E, OGT and USP7; the complex stabilizes KMT2E, preventing KMT2E ubiquitination and proteasomal-mediated degradation. Interacts (via N-terminus) with OGT (via TRP repeats). Interacts with deubiquitinating enzyme USP7 (via MATH domain). Interacts (via HBM motif) with HCFC1 (via Kelch domain). Interacts with E2F1; the interaction is probably indirect and is mediated via HCFC1. Ubiquitinated. Deubiquitinated by USP7. Post-translationally, O-glycosylated at Ser-435 and Thr-440 in the SET domain by OGT which probably prevents KMT2E proteasomal-mediated degradation.

The protein resides in the chromosome. Its subcellular location is the cytoplasm. It localises to the cytoskeleton. The protein localises to the microtubule organizing center. It is found in the centrosome. The protein resides in the nucleus speckle. Associates with chromatin regions downstream of transcriptional start sites of active genes and thus regulates gene transcription. Chromatin interaction is mediated via the binding to tri-methylated histone H3 at 'Lys-4' (H3K4me3). Key regulator of hematopoiesis involved in terminal myeloid differentiation and in the regulation of hematopoietic stem cell (HSCs) self-renewal by a mechanism that involves DNA methylation. Also acts as an important cell cycle regulator, participating in cell cycle regulatory network machinery at multiple cell cycle stages including G1/S transition, S phase progression and mitotic entry. Recruited to E2F1 responsive promoters by HCFC1 where it stimulates tri-methylation of histone H3 at 'Lys-4' and transcriptional activation and thereby facilitates G1 to S phase transition. During myoblast differentiation, required to suppress inappropriate expression of S-phase-promoting genes and maintain expression of determination genes in quiescent cells. The chain is Inactive histone-lysine N-methyltransferase 2E (Kmt2e) from Mus musculus (Mouse).